Consider the following 364-residue polypeptide: 3-dehydroquinate synthase (364 aa).

NAD(+) contacts are provided by residues 75–80 (DGEQYK), 109–113 (GVIGD), 133–134 (TT), lysine 146, lysine 155, and 173–176 (TLDT). Positions 188, 251, and 268 each coordinate Zn(2+).

It belongs to the sugar phosphate cyclases superfamily. Dehydroquinate synthase family. Co(2+) serves as cofactor. Zn(2+) is required as a cofactor. Requires NAD(+) as cofactor.

It localises to the cytoplasm. The catalysed reaction is 7-phospho-2-dehydro-3-deoxy-D-arabino-heptonate = 3-dehydroquinate + phosphate. It functions in the pathway metabolic intermediate biosynthesis; chorismate biosynthesis; chorismate from D-erythrose 4-phosphate and phosphoenolpyruvate: step 2/7. In terms of biological role, catalyzes the conversion of 3-deoxy-D-arabino-heptulosonate 7-phosphate (DAHP) to dehydroquinate (DHQ). In Dechloromonas aromatica (strain RCB), this protein is 3-dehydroquinate synthase.